Reading from the N-terminus, the 83-residue chain is Alpha-toxin CvIV4 (83 aa).

The N-terminal stretch at 1–19 is a signal peptide; the sequence is MNYFILILVAALLILDVNC. Positions 21 to 79 constitute an LCN-type CS-alpha/beta domain; the sequence is KDGYPVEHSGCKYTCWKNEYCDKVCKDLKGEGGYCYINLTCWCTGLPDNVPLKTNQRCN. 4 cysteine pairs are disulfide-bonded: C31–C78, C35–C55, C41–C61, and C45–C63.

Belongs to the long (4 C-C) scorpion toxin superfamily. Sodium channel inhibitor family. As to expression, expressed by the venom gland.

It localises to the secreted. This toxin significantly slows the fast inactivation of Nav1.2/SCN2A (EC(50)=580 nM), Nav1.3/SCN3A (EC(50)=1310 nM), Nav1.4/SCN4A (EC(50)=530 nM), and Nav1.7/SCN9A (EC(50)=1340 nM). The toxin does not affect the peak amplitude of Nav1.7 currents. On all channels cited above, the toxin requires depolarizing potentials to slow channel inactivation. In addition, the toxin has no or very weak effects on the voltage-dependence of steady-state inactivation, and on voltage-dependence of activation. In vivo, it produces paw licking in mice equivalent to the effects of whole venom. The sequence is that of Alpha-toxin CvIV4 from Centruroides vittatus (Striped bark scorpion).